A 1793-amino-acid chain; its full sequence is MIFQSFILDNLVSLCLKIINSVIVVGLYYGFMTTFSTGPSYLFLLRAHVMEEGTEKKISATTGFITGQLVMFISIYYAPLHIALDRPHTITVITLPYLLLYFLGNNQKNFLNYVYKNQNSIRHFSIQRIFFQNLFFQLLNPFFLPSSILMRLANIYIFQSNNKVLFLTSSFVGWLIGHVFFMKWIGLMLVWIQEKNNSIKSTVAIRSNKGVLAKFRKSMFQIFLIFFFITCLYYLGRIPPIYFFTPKMSEIKERGEIEKREGEIDIEINSQRAGSKQEQKITAEEKLSPYLFSKKNNNLDKIKEENDIFGFQKPLVTILFDYNRWNRPLRYIKNDRFENVVRNEISQFFFFTCQSDGKERISFTYPPNLSTFQKMMEMKISLFTRDIISYEELSNSWRSTNEEKKKKLTNEFLNRVEVLDKESLPVDIFENRIRLCNDEKKQKYLTKEYDPFLNGPCRGQIQKWFSPPIQKETYKKNSLFINKIHGILFSNTNNYPKFEQKKNIFDRKSLLTDINFFFNLITKFSRKSVSSLNFEGLYLFPKDNKGKMSSKKKKFLFDTIRPDLNDNKIVNLQKCIGINEIVKKLPRWSYNLIDELEQLEGKKKVEYHQIRSRKAKRVVLLTKNSQNDDNYDETTDTDNTEKKKELALIRYSQQPDFRRDIIKGSIRAQRRKTVTCKLFQRSVDSPLFLEKMEKTSFFCFDILDSSKIFFMFKNWIRKKKELKNSDYTDEKAKESQKKEEEKIKKNEKEEKRRIEIGEAWDSIIFAQVIRGCLLITQSILRKYILLPSLIITKNIVRILLFQFPEWSEDFRDWQREMYIKCTYNGVQLSETEFPKKWLTDGIQIKILFPFRLKPWHRSKLRFTEKKKDPLKNKKVKKKNFCFLTIFGMEVELPFSGYPRNRFSFFDPILKELKKKMKKLKNNFFLILKIVNERTKNFITTLKETSKRIIQSILKKVLFLNKKIKKLYNYLFLFRFKKIDELNQNKKNFPITKNNPIIYESTILIQAINKTNCSLTEKKIKAINAKTKKIIKKIERMTKENKGGFLISEINSNSKKTSSNTKGLELEKKILQILQRRNVQLTHKLYSFFKFLLNFMKKVYTDIFLCIVSVPRINVQFFLESTKKIINQSIYNKKTNEEIIDKTNQSIIHFISIINKSSNTKNTNSAANSYEVSALSQAYVFFKISQIQVLNVYKYKFKYVFDYDGRSFFIKDEIKDYFFGIQGIIHSKLRHKNSPVSLKNQWTNWLKVHYQYDLSQNRWSRLVQKNLKNRINKHRLDQNKDLTKCDSYKKTQLIVSKNKKQQVDFLVNLLIQKKIKKQSRYDLLLYKFINYAEKKELSIYGYRSPFQANKKRAISYDYNTQKKEFFDRMDDISIKNYIAEDAIRYIEQNRDRKYFDWVVMDVKIQNNSISNLQFSFFFKFLRFYDAYRNKPWIIPIKFLFLHFSVNQNFNKIKNIIEKKRRIDIFKPWKKKKILEVELETPNRAKKEYTSRVDLNKPSLSNQEKDIEEDYGESDSKKGGKDKNKKKYKNKIEAEVNLLLRKYLNFHLNWKGSLNKRVINNVKVYCLLIRLKNIKQIAISSIQRGELSLDIMMIQNEKDSTLTGFRKKKEFIEKGIFIIEPVRLSRKNNEQFFMYETARLLLIHKSKRQINQRNPEKSDLDKQIFYKNIPPKRDQRITQNKEKKHYALVVIENILSARRRRELRILICFNPRSINSMPRKTIFDNENKINNCCQVFAKNKDLDKEKKILMNLKLILWPNYRLEDLACINRYWFDTYNGSRFSIVRIHMYPRLKMR.

6 helical membrane passes run 11–31 (LVSL…YYGF), 64–84 (FITG…HIAL), 90–112 (ITVI…NFLN), 129–149 (IFFQ…SSIL), 172–192 (VGWL…LVWI), and 222–242 (IFLI…PPIY). Positions 1504–1524 (DIEEDYGESDSKKGGKDKNKK) are disordered.

The protein belongs to the TIC214 family. As to quaternary structure, part of the Tic complex.

The protein resides in the plastid. It is found in the chloroplast inner membrane. In terms of biological role, involved in protein precursor import into chloroplasts. May be part of an intermediate translocation complex acting as a protein-conducting channel at the inner envelope. In Lotus japonicus (Lotus corniculatus var. japonicus), this protein is Protein TIC 214.